The primary structure comprises 77 residues: Small ribosomal subunit protein bS18 (77 aa).

This sequence belongs to the bacterial ribosomal protein bS18 family. In terms of assembly, part of the 30S ribosomal subunit. Forms a tight heterodimer with protein bS6.

In terms of biological role, binds as a heterodimer with protein bS6 to the central domain of the 16S rRNA, where it helps stabilize the platform of the 30S subunit. This is Small ribosomal subunit protein bS18 from Bacillus cytotoxicus (strain DSM 22905 / CIP 110041 / 391-98 / NVH 391-98).